We begin with the raw amino-acid sequence, 21 residues long: Large ribosomal subunit protein uL30 (21 aa).

Over residues A1–S15 the composition is skewed to polar residues. A disordered region spans residues A1–K21.

It belongs to the universal ribosomal protein uL30 family. As to quaternary structure, part of the 50S ribosomal subunit.

This chain is Large ribosomal subunit protein uL30 (rpmD), found in Brevundimonas diminuta (Pseudomonas diminuta).